Consider the following 289-residue polypeptide: Thymidylate synthase (289 aa).

Residues arginine 21 and 150-151 each bind dUMP; that span reads RR. Catalysis depends on cysteine 170, which acts as the Nucleophile. Residues 191-194, asparagine 202, and 232-234 contribute to the dUMP site; these read RSGD and HIY. Aspartate 194 contributes to the (6R)-5,10-methylene-5,6,7,8-tetrahydrofolate binding site. Alanine 288 provides a ligand contact to (6R)-5,10-methylene-5,6,7,8-tetrahydrofolate.

The protein belongs to the thymidylate synthase family. Bacterial-type ThyA subfamily. In terms of assembly, homodimer.

The protein resides in the cytoplasm. The catalysed reaction is dUMP + (6R)-5,10-methylene-5,6,7,8-tetrahydrofolate = 7,8-dihydrofolate + dTMP. It functions in the pathway pyrimidine metabolism; dTTP biosynthesis. Functionally, catalyzes the reductive methylation of 2'-deoxyuridine-5'-monophosphate (dUMP) to 2'-deoxythymidine-5'-monophosphate (dTMP) while utilizing 5,10-methylenetetrahydrofolate (mTHF) as the methyl donor and reductant in the reaction, yielding dihydrofolate (DHF) as a by-product. This enzymatic reaction provides an intracellular de novo source of dTMP, an essential precursor for DNA biosynthesis. The protein is Thymidylate synthase of Mycoplasmopsis synoviae (strain 53) (Mycoplasma synoviae).